Here is a 124-residue protein sequence, read N- to C-terminus: Magnetosome protein MamC (124 aa).

At 2–8 (PFHLAPY) the chain is on the cytoplasmic side. The chain crosses the membrane as a helical span at residues 9–29 (LAKSVPGVGVLGALVGGAAAL). At 30–64 (AKNVRLLKEKRITNTEAAIDTGKETVGAGLATALS) the chain is on the lumenal side. Residues 36 to 56 (LKEKRITNTEAAIDTGKETVG) form an MIC, when fused with the C-terminus of maltose-binding protein (MBP) or expressed as a fragment, improves quality of iron particles during precipitation experiments, binds magnetite region. A helical transmembrane segment spans residues 65–85 (AVAATAVGGGLVVSLGTALVA). The Cytoplasmic segment spans residues 86 to 124 (GVAAKYAWDRGVDLVEKELNRGKAANGASDEDILRDELA).

It belongs to the magnetosome MamC family. As to quaternary structure, probably interacts with MamA.

The protein resides in the magnetosome membrane. In terms of biological role, probably involved in magnetite crystal growth. The lumenal domain may bind the magnetite crystals, affecting crystal size and shape. The protein is Magnetosome protein MamC of Paramagnetospirillum magneticum (strain ATCC 700264 / AMB-1) (Magnetospirillum magneticum).